The chain runs to 433 residues: Inositol hexakisphosphate kinase 1 (433 aa).

Positions 100-160 (ETVEQDDTPE…SPKVELHSHS (61 aa)) are disordered. Positions 113 to 123 (PRRKHSRRSLH) are enriched in basic residues. Polar residues predominate over residues 139-149 (SFETSESSQEA). Over residues 150 to 160 (KSPKVELHSHS) the composition is skewed to basic and acidic residues. A Phosphoserine modification is found at serine 151. 220–228 (PCVLDLKMG) is a binding site for substrate. The tract at residues 359–383 (EVPPPCGPSTSPSSTSLEAGPSSPP) is disordered.

The protein belongs to the inositol phosphokinase (IPK) family. In terms of tissue distribution, highly expressed in brain and testis. Detected at much lower levels in heart, kidney, liver, lung and spleen.

The protein resides in the cytoplasm. The protein localises to the nucleus. It carries out the reaction 1D-myo-inositol hexakisphosphate + ATP = 5-diphospho-1D-myo-inositol 1,2,3,4,6-pentakisphosphate + ADP. The catalysed reaction is 1-diphospho-1D-myo-inositol 2,3,4,5,6-pentakisphosphate + ATP + H(+) = 1,5-bis(diphospho)-1D-myo-inositol 2,3,4,6-tetrakisphosphate + ADP. Functionally, converts inositol hexakisphosphate (InsP6) to diphosphoinositol pentakisphosphate (InsP7/PP-InsP5). Converts 1,3,4,5,6-pentakisphosphate (InsP5) to PP-InsP4. This chain is Inositol hexakisphosphate kinase 1 (Ip6k1), found in Mus musculus (Mouse).